The primary structure comprises 333 residues: MKKIAIDAMGGENAPKAIIDAVLKAKPKLKDIEFILFGDAEKINQLIPNEQKERIEVVATSEVIVDSDEPVRAIRRKKDSSMVVAANYVKAGKADALFSLGNTGALLACGIFIIGRIKGVERPALMPTLPSAKSEQGFNIIDVGANAQSKPEYLVQWAQMANFYAQKVRNIQNPTVALLNNGAEDDKGDPLHQEAYKLLKETKLNFIGNVEGNDLMEGKADVIVTDGFTGNATLKAIEGTASVILRLLKDSLLNNGLRPKVGALLAKPGLTALKKRFDTARYGGAVLLGVNAPVVKTHGRSNIRPIYYTLLQIDKMLSQDLVGEYKKYFSESR.

It belongs to the PlsX family. As to quaternary structure, homodimer. Probably interacts with PlsY.

It is found in the cytoplasm. The enzyme catalyses a fatty acyl-[ACP] + phosphate = an acyl phosphate + holo-[ACP]. Its pathway is lipid metabolism; phospholipid metabolism. In terms of biological role, catalyzes the reversible formation of acyl-phosphate (acyl-PO(4)) from acyl-[acyl-carrier-protein] (acyl-ACP). This enzyme utilizes acyl-ACP as fatty acyl donor, but not acyl-CoA. The sequence is that of Phosphate acyltransferase from Lactobacillus gasseri (strain ATCC 33323 / DSM 20243 / BCRC 14619 / CIP 102991 / JCM 1131 / KCTC 3163 / NCIMB 11718 / NCTC 13722 / AM63).